The sequence spans 522 residues: Ribonuclease Y (522 aa).

Residues 3 to 23 (ELIMYILATAVVSIGVGIVAG) form a helical membrane-spanning segment. Residues 212 to 272 (CVSIFNIESD…VRREVARLSL (61 aa)) enclose the KH domain. In terms of domain architecture, HD spans 338 to 431 (LLQHSREVAK…VQVCDAISGA (94 aa)).

The protein belongs to the RNase Y family.

It localises to the cell membrane. Its function is as follows. Endoribonuclease that initiates mRNA decay. In Cytophaga hutchinsonii (strain ATCC 33406 / DSM 1761 / CIP 103989 / NBRC 15051 / NCIMB 9469 / D465), this protein is Ribonuclease Y.